A 413-amino-acid chain; its full sequence is Gamma-glutamyl phosphate reductase (413 aa).

Belongs to the gamma-glutamyl phosphate reductase family.

The protein resides in the cytoplasm. The catalysed reaction is L-glutamate 5-semialdehyde + phosphate + NADP(+) = L-glutamyl 5-phosphate + NADPH + H(+). It functions in the pathway amino-acid biosynthesis; L-proline biosynthesis; L-glutamate 5-semialdehyde from L-glutamate: step 2/2. In terms of biological role, catalyzes the NADPH-dependent reduction of L-glutamate 5-phosphate into L-glutamate 5-semialdehyde and phosphate. The product spontaneously undergoes cyclization to form 1-pyrroline-5-carboxylate. This is Gamma-glutamyl phosphate reductase from Salinispora tropica (strain ATCC BAA-916 / DSM 44818 / JCM 13857 / NBRC 105044 / CNB-440).